A 632-amino-acid polypeptide reads, in one-letter code: tRNA-guanine(15) transglycosylase (632 aa).

Aspartate 86 acts as the Nucleophile in catalysis. Substrate-binding residues include aspartate 121 and glycine 186. Residues 553–628 enclose the PUA domain; it reads NLRVFVKNES…IAVKIHEGRD (76 aa).

It belongs to the archaeosine tRNA-ribosyltransferase family. Requires Zn(2+) as cofactor.

The enzyme catalyses guanosine(15) in tRNA + 7-cyano-7-deazaguanine = 7-cyano-7-carbaguanosine(15) in tRNA + guanine. The protein operates within tRNA modification; archaeosine-tRNA biosynthesis. Its function is as follows. Exchanges the guanine residue with 7-cyano-7-deazaguanine (preQ0) at position 15 in the dihydrouridine loop (D-loop) of archaeal tRNAs. This chain is tRNA-guanine(15) transglycosylase, found in Thermoplasma volcanium (strain ATCC 51530 / DSM 4299 / JCM 9571 / NBRC 15438 / GSS1).